Reading from the N-terminus, the 370-residue chain is MTVDAVRVELGARAYEVRIGPGLIARAGAEIAPLLRRPKVAILTDETVAGLHLDPFRQALAEAGIASSALALPAGEATKGWPQFARAVEWLLEEKVERRDVVVALGGGVIGDLAGFAAAVLRRGVRFVQVPTTLLAQVDSSVGGKTGINTAQGKNLVGAFHQPSLVLADIGVLETLPPRDFRAGYGEVVKYGLLGDADFYEWLEEAGPRLAADAEARQRAVRRSVEMKAEIVARDETEEGDRALLNLGHTFCHALEKATGYSGRLLHGEGVAIGCALAFELSQRLGLCAQEAPSRLRAHLRAMGMKVDLRDIPGDLPSAEALLALMAQDKKVVDGKLRFILARGIGQAFVADDVPGDVVRTLLEDALAQR.

NAD(+)-binding positions include glycine 108–aspartate 112, threonine 132–threonine 133, lysine 145, and lysine 154. The Zn(2+) site is built by glutamate 187, histidine 249, and histidine 267.

This sequence belongs to the sugar phosphate cyclases superfamily. Dehydroquinate synthase family. It depends on Co(2+) as a cofactor. Zn(2+) is required as a cofactor. The cofactor is NAD(+).

The protein localises to the cytoplasm. The catalysed reaction is 7-phospho-2-dehydro-3-deoxy-D-arabino-heptonate = 3-dehydroquinate + phosphate. It participates in metabolic intermediate biosynthesis; chorismate biosynthesis; chorismate from D-erythrose 4-phosphate and phosphoenolpyruvate: step 2/7. Catalyzes the conversion of 3-deoxy-D-arabino-heptulosonate 7-phosphate (DAHP) to dehydroquinate (DHQ). This is 3-dehydroquinate synthase from Cereibacter sphaeroides (strain ATCC 17023 / DSM 158 / JCM 6121 / CCUG 31486 / LMG 2827 / NBRC 12203 / NCIMB 8253 / ATH 2.4.1.) (Rhodobacter sphaeroides).